The following is a 66-amino-acid chain: uncharacterized protein (66 aa).

The segment covering 1 to 18 has biased composition (low complexity); that stretch reads MSTTSSSSTFSTRTASLS. Positions 1–22 are disordered; that stretch reads MSTTSSSSTFSTRTASLSQSYT.

This is an uncharacterized protein from Schizosaccharomyces pombe (strain 972 / ATCC 24843) (Fission yeast).